Reading from the N-terminus, the 443-residue chain is Threonine/serine transporter TdcC (443 aa).

11 helical membrane passes run 22–42, 44–64, 97–117, 140–160, 163–183, 207–227, 259–279, 319–339, 366–386, 389–409, and 423–443; these read TTWT…FFPI, AGFG…PIAF, GVVI…IYGV, FVAL…KDLM, VMSY…LSLI, ILVT…FSPI, ASML…FTLS, ASII…LGTL, ISMI…PNIL, IEAM…MYAI, and DNVF…YKLF.

This sequence belongs to the amino acid/polyamine transporter 2 family. SdaC/TdcC subfamily.

Its subcellular location is the cell inner membrane. The enzyme catalyses L-threonine(in) + H(+)(in) = L-threonine(out) + H(+)(out). The catalysed reaction is L-serine(in) + H(+)(in) = L-serine(out) + H(+)(out). Functionally, involved in the import of threonine and serine into the cell, with the concomitant import of a proton (symport system). The polypeptide is Threonine/serine transporter TdcC (Salmonella newport (strain SL254)).